A 152-amino-acid chain; its full sequence is UPF0178 protein SaurJH9_0705 (152 aa).

This sequence belongs to the UPF0178 family.

The chain is UPF0178 protein SaurJH9_0705 from Staphylococcus aureus (strain JH9).